Here is a 573-residue protein sequence, read N- to C-terminus: Sulfite reductase [NADPH] hemoprotein beta-component (573 aa).

[4Fe-4S] cluster-binding residues include cysteine 438, cysteine 444, cysteine 483, and cysteine 487. Cysteine 487 serves as a coordination point for siroheme.

Belongs to the nitrite and sulfite reductase 4Fe-4S domain family. As to quaternary structure, alpha(8)-beta(8). The alpha component is a flavoprotein, the beta component is a hemoprotein. Requires siroheme as cofactor. It depends on [4Fe-4S] cluster as a cofactor.

It carries out the reaction hydrogen sulfide + 3 NADP(+) + 3 H2O = sulfite + 3 NADPH + 4 H(+). It participates in sulfur metabolism; hydrogen sulfide biosynthesis; hydrogen sulfide from sulfite (NADPH route): step 1/1. Its function is as follows. Component of the sulfite reductase complex that catalyzes the 6-electron reduction of sulfite to sulfide. This is one of several activities required for the biosynthesis of L-cysteine from sulfate. The protein is Sulfite reductase [NADPH] hemoprotein beta-component of Nitrosomonas eutropha (strain DSM 101675 / C91 / Nm57).